The following is a 202-amino-acid chain: NADH-quinone oxidoreductase subunit C (202 aa).

Belongs to the complex I 30 kDa subunit family. In terms of assembly, NDH-1 is composed of 14 different subunits. Subunits NuoB, C, D, E, F, and G constitute the peripheral sector of the complex.

Its subcellular location is the cell inner membrane. The catalysed reaction is a quinone + NADH + 5 H(+)(in) = a quinol + NAD(+) + 4 H(+)(out). Functionally, NDH-1 shuttles electrons from NADH, via FMN and iron-sulfur (Fe-S) centers, to quinones in the respiratory chain. The immediate electron acceptor for the enzyme in this species is believed to be ubiquinone. Couples the redox reaction to proton translocation (for every two electrons transferred, four hydrogen ions are translocated across the cytoplasmic membrane), and thus conserves the redox energy in a proton gradient. The chain is NADH-quinone oxidoreductase subunit C from Brucella abortus (strain 2308).